Reading from the N-terminus, the 772-residue chain is Carnitine O-palmitoyltransferase 1, muscle isoform (772 aa).

Over 1-47 (MAEAHQAVAFQFTVTPDGVDFRLSREALRHIYLSGINSWKKRLIRIK) the chain is Cytoplasmic. A helical transmembrane segment spans residues 48–73 (NGILRGVYPGSPTSWLVVVMATVGSN). Residues 74-102 (YCKVDISMGLVHCIQRCLPTRYGSYGTPQ) lie on the Mitochondrial intermembrane side of the membrane. Residues 103–122 (TETLLSMVIFSTGVWATGIF) traverse the membrane as a helical segment. Residues 123–772 (LFRQTLKLLL…DLFKISKTDS (650 aa)) lie on the Cytoplasmic side of the membrane. H473 serves as the catalytic Proton acceptor. 555 to 567 (GKGLIKKCRTSPD) serves as a coordination point for CoA. Positions 589 and 602 each coordinate (R)-carnitine.

It belongs to the carnitine/choline acetyltransferase family. In terms of tissue distribution, high expression in heart, skeletal muscle and brown adipose tissue. Also expressed in white adipose tissue, but not in liver.

It is found in the mitochondrion outer membrane. It carries out the reaction (R)-carnitine + hexadecanoyl-CoA = O-hexadecanoyl-(R)-carnitine + CoA. The protein operates within lipid metabolism; fatty acid beta-oxidation. Its function is as follows. Catalyzes the transfer of the acyl group of long-chain fatty acid-CoA conjugates onto carnitine, an essential step for the mitochondrial uptake of long-chain fatty acids and their subsequent beta-oxidation in the mitochondrion. In Rattus norvegicus (Rat), this protein is Carnitine O-palmitoyltransferase 1, muscle isoform (Cpt1b).